The following is a 596-amino-acid chain: Zinc finger CCCH domain-containing protein 64 (596 aa).

Disordered stretches follow at residues 243-263 (LSPTPTSTMSPAELSAKPPKT) and 272-291 (DGAAESKKRPNDSDSDSQYW). 2 consecutive C3H1-type zinc fingers follow at residues 303 to 331 (SQGEKLCFKFVCSGSCPRGEDCHFQHNAE) and 335 to 363 (QCRRGVCLDLIIKGKCEKGPECSYKHEFQ).

The polypeptide is Zinc finger CCCH domain-containing protein 64 (Arabidopsis thaliana (Mouse-ear cress)).